Here is a 131-residue protein sequence, read N- to C-terminus: Small ribosomal subunit protein uS8 (131 aa).

The protein belongs to the universal ribosomal protein uS8 family. In terms of assembly, part of the 30S ribosomal subunit. Contacts proteins S5 and S12.

One of the primary rRNA binding proteins, it binds directly to 16S rRNA central domain where it helps coordinate assembly of the platform of the 30S subunit. The chain is Small ribosomal subunit protein uS8 from Aromatoleum aromaticum (strain DSM 19018 / LMG 30748 / EbN1) (Azoarcus sp. (strain EbN1)).